Here is a 223-residue protein sequence, read N- to C-terminus: Thiamine-phosphate synthase (223 aa).

Residues 37–41 (QFREK) and aspartate 72 contribute to the 4-amino-2-methyl-5-(diphosphooxymethyl)pyrimidine site. 2 residues coordinate Mg(2+): aspartate 73 and aspartate 92. Serine 110 lines the 4-amino-2-methyl-5-(diphosphooxymethyl)pyrimidine pocket. 136-138 (TQS) lines the 2-[(2R,5Z)-2-carboxy-4-methylthiazol-5(2H)-ylidene]ethyl phosphate pocket. Lysine 139 contacts 4-amino-2-methyl-5-(diphosphooxymethyl)pyrimidine. 2-[(2R,5Z)-2-carboxy-4-methylthiazol-5(2H)-ylidene]ethyl phosphate contacts are provided by residues glycine 168 and 188–189 (IS).

Belongs to the thiamine-phosphate synthase family. Mg(2+) serves as cofactor.

It carries out the reaction 2-[(2R,5Z)-2-carboxy-4-methylthiazol-5(2H)-ylidene]ethyl phosphate + 4-amino-2-methyl-5-(diphosphooxymethyl)pyrimidine + 2 H(+) = thiamine phosphate + CO2 + diphosphate. The enzyme catalyses 2-(2-carboxy-4-methylthiazol-5-yl)ethyl phosphate + 4-amino-2-methyl-5-(diphosphooxymethyl)pyrimidine + 2 H(+) = thiamine phosphate + CO2 + diphosphate. It catalyses the reaction 4-methyl-5-(2-phosphooxyethyl)-thiazole + 4-amino-2-methyl-5-(diphosphooxymethyl)pyrimidine + H(+) = thiamine phosphate + diphosphate. It participates in cofactor biosynthesis; thiamine diphosphate biosynthesis; thiamine phosphate from 4-amino-2-methyl-5-diphosphomethylpyrimidine and 4-methyl-5-(2-phosphoethyl)-thiazole: step 1/1. Functionally, condenses 4-methyl-5-(beta-hydroxyethyl)thiazole monophosphate (THZ-P) and 2-methyl-4-amino-5-hydroxymethyl pyrimidine pyrophosphate (HMP-PP) to form thiamine monophosphate (TMP). The sequence is that of Thiamine-phosphate synthase from Streptococcus agalactiae serotype III (strain NEM316).